The chain runs to 414 residues: MTKARLFRLWLVLGSVFMILLIIVYWDSAGAAHFYLHTSFSRPHTGPPLPTPGPDRDRELTADSDVDEFLDKFLSAGVKQSDLPRKETEQPPAPGSMEESVRGYDWSPRDARRSPDQGRQQAERRSVLRGFCANSSLAFPTKERAFDDIPNSELSHLIVDDRHGAIYCYVPKVACTNWKRVMIVLSGSLLHRGAPYRDPLRIPREHVHNASAHLTFNKFWRRYGKLSRHLMKVKLKKYTKFLFVRDPFVRLISAFRSKFELENEEFYRKFAVPMLRLYANHTSLPASAREAFRAGLKVSFANFIQYLLDPHTEKLAPFNEHWRQVYRLCHPCQIDYDFVGKLETLDEDAAQLLQLLQVDRQLRFPPSYRNRTASSWEEDWFAKIPLAWRQQLYKLYEADFVLFGYPKPENLLRD.

The Cytoplasmic portion of the chain corresponds to 1–5 (MTKAR). The helical; Signal-anchor for type II membrane protein transmembrane segment at 6 to 26 (LFRLWLVLGSVFMILLIIVYW) threads the bilayer. At 27 to 414 (DSAGAAHFYL…YPKPENLLRD (388 aa)) the chain is on the lumenal side. Residues 80–125 (QSDLPRKETEQPPAPGSMEESVRGYDWSPRDARRSPDQGRQQAERR) are disordered. Over residues 99–125 (ESVRGYDWSPRDARRSPDQGRQQAERR) the composition is skewed to basic and acidic residues. An N-linked (GlcNAc...) asparagine glycan is attached at N134. 171–177 (PKVACTN) contacts 3'-phosphoadenylyl sulfate. N-linked (GlcNAc...) asparagine glycosylation occurs at N209. Residue 245 to 253 (RDPFVRLIS) coordinates 3'-phosphoadenylyl sulfate. N-linked (GlcNAc...) asparagine glycosylation is found at N280 and N370.

It belongs to the sulfotransferase 2 family. As to expression, widely expressed. Expressed a high level in spinal chord, heart, spleen, thyroid, pituitary gland, adrenal gland, peripheral blood leukocytes, thymus, lung, small intestine, fetal kidney, fetal spleen and fetal lung.

The protein localises to the golgi apparatus membrane. The enzyme catalyses chondroitin beta-D-glucuronate + n 3'-phosphoadenylyl sulfate = chondroitin 4'-sulfate + n adenosine 3',5'-bisphosphate + n H(+). In terms of biological role, catalyzes the transfer of sulfate to position 4 of the N-acetylgalactosamine (GalNAc) residue of chondroitin and desulfated dermatan sulfate. Chondroitin sulfate constitutes the predominant proteoglycan present in cartilage and is distributed on the surfaces of many cells and extracellular matrices. Activity toward partially desulfated dermatan sulfate is however lower. Does not form 4, 6-di-O-sulfated GalNAc when chondroitin sulfate C is used as an acceptor. In Homo sapiens (Human), this protein is Carbohydrate sulfotransferase 12 (CHST12).